Consider the following 398-residue polypeptide: Sphingosine 1-phosphate receptor 5 (398 aa).

Residues 1–40 (MEPGLLRPAPVSEVIVLHYNYTGKLRGARYQPGAGLRADA) are Extracellular-facing. Residue Asn20 is glycosylated (N-linked (GlcNAc...) asparagine). A helical transmembrane segment spans residues 41-61 (VVCLAVCALIVLENLAVLVVL). Topologically, residues 62–70 (GRHPRFHAP) are cytoplasmic. The helical transmembrane segment at 71–91 (MFLLLGSLTLSDLLAGAAYAA) threads the bilayer. Residues 92–111 (NILLSGPLTLRLSPALWFAR) are Extracellular-facing. The chain crosses the membrane as a helical span at residues 112 to 132 (EGGVFVALAASVLSLLAIALE). Topologically, residues 133 to 151 (RLLTMERRGPAPAARRGRT) are cytoplasmic. The chain crosses the membrane as a helical span at residues 152–172 (LALAAGAWGVSLLLGLLPALG). Topologically, residues 173-191 (WNCLGRLEACSTVLPLYAK) are extracellular. A helical membrane pass occupies residues 192–212 (AYVLFCVLAFVGILAAICGLY). At 213-252 (ARIYCQVRAKAQRLRARPGAGEGTSARARGTPRSLALLRT) the chain is on the cytoplasmic side. Residues 253 to 273 (LSVVLVAFVACWGPLFLLLLL) traverse the membrane as a helical segment. Topologically, residues 274–287 (DVACPARACPVLLQ) are extracellular. A helical transmembrane segment spans residues 288 to 308 (ADPFLGLAMANSLLNPIIYTF). The Cytoplasmic portion of the chain corresponds to 309 to 398 (TNRDLRHALL…QTLVPPPAAD (90 aa)). Cys323 carries the S-palmitoyl cysteine lipid modification. A disordered region spans residues 332-398 (SGTSRSPGST…QTLVPPPAAD (67 aa)). Low complexity predominate over residues 334–343 (TSRSPGSTLG). Ser337 carries the phosphoserine modification. Positions 359–373 (SSSRSERSSPQRDGL) are enriched in basic and acidic residues. Ser381 carries the phosphoserine modification.

Belongs to the G-protein coupled receptor 1 family.

It localises to the cell membrane. Receptor for the lysosphingolipid sphingosine 1-phosphate (S1P). S1P is a bioactive lysophospholipid that elicits diverse physiological effect on most types of cells and tissues. Is coupled to both the G(i/O)alpha and G(12) subclass of heteromeric G-proteins. The polypeptide is Sphingosine 1-phosphate receptor 5 (S1PR5) (Sus scrofa (Pig)).